A 545-amino-acid chain; its full sequence is Glucose-6-phosphate isomerase (545 aa).

Glutamate 351 serves as the catalytic Proton donor. Catalysis depends on residues histidine 382 and lysine 510.

It belongs to the GPI family.

It localises to the cytoplasm. It carries out the reaction alpha-D-glucose 6-phosphate = beta-D-fructose 6-phosphate. It participates in carbohydrate biosynthesis; gluconeogenesis. The protein operates within carbohydrate degradation; glycolysis; D-glyceraldehyde 3-phosphate and glycerone phosphate from D-glucose: step 2/4. Catalyzes the reversible isomerization of glucose-6-phosphate to fructose-6-phosphate. The chain is Glucose-6-phosphate isomerase from Helicobacter pylori (strain ATCC 700392 / 26695) (Campylobacter pylori).